A 423-amino-acid polypeptide reads, in one-letter code: Serine hydroxymethyltransferase (423 aa).

(6S)-5,6,7,8-tetrahydrofolate-binding positions include leucine 121 and 125–127; that span reads GHL. Residue lysine 230 is modified to N6-(pyridoxal phosphate)lysine. 355–357 contributes to the (6S)-5,6,7,8-tetrahydrofolate binding site; the sequence is SPF.

The protein belongs to the SHMT family. As to quaternary structure, homodimer. It depends on pyridoxal 5'-phosphate as a cofactor.

It is found in the cytoplasm. It catalyses the reaction (6R)-5,10-methylene-5,6,7,8-tetrahydrofolate + glycine + H2O = (6S)-5,6,7,8-tetrahydrofolate + L-serine. It functions in the pathway one-carbon metabolism; tetrahydrofolate interconversion. Its pathway is amino-acid biosynthesis; glycine biosynthesis; glycine from L-serine: step 1/1. Its function is as follows. Catalyzes the reversible interconversion of serine and glycine with tetrahydrofolate (THF) serving as the one-carbon carrier. This reaction serves as the major source of one-carbon groups required for the biosynthesis of purines, thymidylate, methionine, and other important biomolecules. Also exhibits THF-independent aldolase activity toward beta-hydroxyamino acids, producing glycine and aldehydes, via a retro-aldol mechanism. This is Serine hydroxymethyltransferase from Hydrogenovibrio crunogenus (strain DSM 25203 / XCL-2) (Thiomicrospira crunogena).